The following is a 207-amino-acid chain: High frequency lysogenization protein HflD homolog (207 aa).

It belongs to the HflD family.

Its subcellular location is the cytoplasm. The protein resides in the cell inner membrane. In Methylococcus capsulatus (strain ATCC 33009 / NCIMB 11132 / Bath), this protein is High frequency lysogenization protein HflD homolog.